The sequence spans 109 residues: uncharacterized protein (109 aa).

The tract at residues 1-25 (METKPNALTGTSLSSTSGQTTQKSI) is disordered. Residues 8-22 (LTGTSLSSTSGQTTQ) are compositionally biased toward low complexity. A helical transmembrane segment spans residues 42–62 (TFGLMAILNLALLLWTLLATL). The disordered stretch occupies residues 84-109 (TTLQKNTPSAKNGLKNTTNKHSHEDM). Residues 91–102 (PSAKNGLKNTTN) are compositionally biased toward polar residues.

The protein localises to the host membrane. This is an uncharacterized protein from Bdellovibrio phage phiMH2K (Bacteriophage phiMH2K).